The chain runs to 286 residues: Beta-glucanase (286 aa).

The signal sequence occupies residues 1 to 30; sequence MCTMPLMKLKKMMRRTAFLLSVLIGCSMLG. The region spanning 48 to 286 is the GH16 domain; sequence FDYSGLPDPE…DYVRVYRWVE (239 aa). Glutamate 158 functions as the Nucleophile in the catalytic mechanism. Glutamate 163 acts as the Proton donor in catalysis.

The protein belongs to the glycosyl hydrolase 16 family.

The enzyme catalyses Hydrolysis of (1-&gt;4)-beta-D-glucosidic linkages in beta-D-glucans containing (1-&gt;3)- and (1-&gt;4)-bonds.. Functionally, shows activity on lichenan, beta-glucan and laminarin but not on CMC cellulose or xylan. The protein is Beta-glucanase (bglA) of Rhodothermus marinus (Rhodothermus obamensis).